The primary structure comprises 58 residues: Small ribosomal subunit protein bS21 (58 aa).

Positions 27–58 are disordered; that stretch reads GTLQELRKREHYEKPSVKRKRKSEAARKRKKY. Positions 31–42 are enriched in basic and acidic residues; the sequence is ELRKREHYEKPS. Residues 43-58 are compositionally biased toward basic residues; sequence VKRKRKSEAARKRKKY.

It belongs to the bacterial ribosomal protein bS21 family.

The polypeptide is Small ribosomal subunit protein bS21 (rpsU) (Lactococcus lactis subsp. lactis (strain IL1403) (Streptococcus lactis)).